We begin with the raw amino-acid sequence, 465 residues long: 2-methylcitrate synthase, mitochondrial (465 aa).

CoA-binding residues include arginine 72 and lysine 190. Oxaloacetate is bound at residue histidine 265. A CoA-binding site is contributed by leucine 300. The active site involves histidine 301. The CoA site is built by valine 342, glycine 344, and tyrosine 345. Residues histidine 347 and arginine 356 each coordinate oxaloacetate. Histidine 347 is a catalytic residue. Residues threonine 394, lysine 395, and asparagine 400 each contribute to the CoA site. Residue aspartate 402 is part of the active site. Residues arginine 428 and arginine 448 each contribute to the oxaloacetate site.

Belongs to the citrate synthase family. In terms of assembly, homodimer.

It is found in the mitochondrion matrix. The catalysed reaction is propanoyl-CoA + oxaloacetate + H2O = (2S,3S)-2-methylcitrate + CoA + H(+). The enzyme catalyses oxaloacetate + acetyl-CoA + H2O = citrate + CoA + H(+). The protein operates within organic acid metabolism; propanoate degradation. Its activity is regulated as follows. Activity is inhibited by p-chloromercuribenzoate (pCMB), monoiodoacetamide, H(2)O(2), ATP, ADP, NADH, NADPH, Hg(2+) and Zn(2+). In terms of biological role, component of the methylcitrate cycle that catalyzes the synthesis of (2S,3S)-2-methylcitrate from propionyl-CoA and oxaloacetate. Plays an important role in detoxification of propionyl-CoA, an inhibitor of both primary and secondary metabolism. Also has citrate synthase activity using as substrates acetyl-CoA and oxaloacetate. This is 2-methylcitrate synthase, mitochondrial from Yarrowia lipolytica (strain CLIB 122 / E 150) (Yeast).